Consider the following 1396-residue polypeptide: Helicase ARIP4 (1396 aa).

Residues 1 to 103 (MSDASISGSE…LQKPANLRRN (103 aa)) are disordered. Residues 11 to 49 (PELDPEDMEEEEEDDEDDDEEEEEEEDEEDNDGDDEDDK) are compositionally biased toward acidic residues. Residues 75–84 (RSTTSGQSGQ) show a composition bias toward polar residues. Positions 290–510 (RFSGSSGFGC…WCMVDFVRPD (221 aa)) constitute a Helicase ATP-binding domain. 303-310 (HSMGLGKT) provides a ligand contact to ATP. The DEAH box motif lies at 461–464 (DEGH). Positions 549 to 553 (LHSLL) match the LXXLL motif 1 motif. The Helicase C-terminal domain occupies 717–891 (KMVLLFHLIE…RVVDDLNPEV (175 aa)). Disordered regions lie at residues 1117-1168 (SGKQ…PDSP) and 1194-1250 (NLGL…STMN). Composition is skewed to polar residues over residues 1128 to 1148 (QATSGAQGSSAPYLSNGRHST) and 1218 to 1238 (DQSSHWPSNKRNPYSQLSYPN). The LXXLL motif 2 motif lies at 1273 to 1277 (LPSLL). A disordered region spans residues 1340–1396 (GLPTNNPASTFPGYLSSHSNYQASPGTSSRPLPSGETELGSCEEDGRDDDVVEVTGE). Positions 1355–1370 (SSHSNYQASPGTSSRP) are enriched in polar residues. The segment covering 1380–1396 (SCEEDGRDDDVVEVTGE) has biased composition (acidic residues).

Belongs to the SNF2/RAD54 helicase family.

It is found in the nucleus. The catalysed reaction is ATP + H2O = ADP + phosphate + H(+). Functionally, DNA helicase that modulates androgen receptor (AR)-dependent transactivation in a promoter-dependent manner. The protein is Helicase ARIP4 (rad54l2) of Xenopus tropicalis (Western clawed frog).